Consider the following 92-residue polypeptide: Small ribosomal subunit protein uS19 (92 aa).

The protein belongs to the universal ribosomal protein uS19 family.

In terms of biological role, protein S19 forms a complex with S13 that binds strongly to the 16S ribosomal RNA. This chain is Small ribosomal subunit protein uS19, found in Lactococcus lactis subsp. lactis (strain IL1403) (Streptococcus lactis).